The sequence spans 262 residues: Hemin import ATP-binding protein HmuV (262 aa).

The ABC transporter domain occupies 3–244; that stretch reads LQARNLTLAR…DHMRRVYGIE (242 aa). Residue 35–42 participates in ATP binding; sequence GANGAGKS.

The protein belongs to the ABC transporter superfamily. Heme (hemin) importer (TC 3.A.1.14.5) family. The complex is composed of two ATP-binding proteins (HmuV), two transmembrane proteins (HmuU) and a solute-binding protein (HmuT).

The protein localises to the cell inner membrane. In terms of biological role, part of the ABC transporter complex HmuTUV involved in hemin import. Responsible for energy coupling to the transport system. The polypeptide is Hemin import ATP-binding protein HmuV (Bordetella parapertussis (strain 12822 / ATCC BAA-587 / NCTC 13253)).